The following is a 75-amino-acid chain: Small ribosomal subunit protein bS18 (75 aa).

This sequence belongs to the bacterial ribosomal protein bS18 family. As to quaternary structure, part of the 30S ribosomal subunit. Forms a tight heterodimer with protein bS6.

Its function is as follows. Binds as a heterodimer with protein bS6 to the central domain of the 16S rRNA, where it helps stabilize the platform of the 30S subunit. The chain is Small ribosomal subunit protein bS18 from Shewanella baltica (strain OS223).